Reading from the N-terminus, the 159-residue chain is Large ribosomal subunit protein uL10 (159 aa).

It belongs to the universal ribosomal protein uL10 family. In terms of assembly, part of the ribosomal stalk of the 50S ribosomal subunit. The N-terminus interacts with L11 and the large rRNA to form the base of the stalk. The C-terminus forms an elongated spine to which L12 dimers bind in a sequential fashion forming a multimeric L10(L12)X complex.

Its function is as follows. Forms part of the ribosomal stalk, playing a central role in the interaction of the ribosome with GTP-bound translation factors. The protein is Large ribosomal subunit protein uL10 of Campylobacter jejuni subsp. jejuni serotype O:6 (strain 81116 / NCTC 11828).